A 253-amino-acid polypeptide reads, in one-letter code: Sec-independent protein translocase protein TatC (253 aa).

A run of 5 helical transmembrane segments spans residues 19–39 (ILIIVVFFVIALVVGFFLATP), 70–90 (FAFTSAFILVFPIILYQLWAF), 109–129 (IAFFLFLGGLSFAYFILFPFL), 154–174 (FLFQITMPFGVLFQLPVVVMF), and 194–214 (FFVLLVVAGFITPPELISHLM).

The protein belongs to the TatC family. As to quaternary structure, forms a complex with TatA.

It is found in the cell membrane. Its function is as follows. Part of the twin-arginine translocation (Tat) system that transports large folded proteins containing a characteristic twin-arginine motif in their signal peptide across membranes. In Halalkalibacterium halodurans (strain ATCC BAA-125 / DSM 18197 / FERM 7344 / JCM 9153 / C-125) (Bacillus halodurans), this protein is Sec-independent protein translocase protein TatC.